The primary structure comprises 323 residues: tRNA(Ile)-lysidine synthase (323 aa).

33 to 38 contacts ATP; sequence SGGSDS.

This sequence belongs to the tRNA(Ile)-lysidine synthase family.

It is found in the cytoplasm. The enzyme catalyses cytidine(34) in tRNA(Ile2) + L-lysine + ATP = lysidine(34) in tRNA(Ile2) + AMP + diphosphate + H(+). Functionally, ligates lysine onto the cytidine present at position 34 of the AUA codon-specific tRNA(Ile) that contains the anticodon CAU, in an ATP-dependent manner. Cytidine is converted to lysidine, thus changing the amino acid specificity of the tRNA from methionine to isoleucine. The chain is tRNA(Ile)-lysidine synthase from Mycobacterium leprae (strain TN).